Consider the following 494-residue polypeptide: Aspartyl/glutamyl-tRNA(Asn/Gln) amidotransferase subunit B (494 aa).

The protein belongs to the GatB/GatE family. GatB subfamily. In terms of assembly, heterotrimer of A, B and C subunits.

The enzyme catalyses L-glutamyl-tRNA(Gln) + L-glutamine + ATP + H2O = L-glutaminyl-tRNA(Gln) + L-glutamate + ADP + phosphate + H(+). The catalysed reaction is L-aspartyl-tRNA(Asn) + L-glutamine + ATP + H2O = L-asparaginyl-tRNA(Asn) + L-glutamate + ADP + phosphate + 2 H(+). Allows the formation of correctly charged Asn-tRNA(Asn) or Gln-tRNA(Gln) through the transamidation of misacylated Asp-tRNA(Asn) or Glu-tRNA(Gln) in organisms which lack either or both of asparaginyl-tRNA or glutaminyl-tRNA synthetases. The reaction takes place in the presence of glutamine and ATP through an activated phospho-Asp-tRNA(Asn) or phospho-Glu-tRNA(Gln). This chain is Aspartyl/glutamyl-tRNA(Asn/Gln) amidotransferase subunit B, found in Rhodopseudomonas palustris (strain BisA53).